The primary structure comprises 310 residues: MSIAEDITQLIGRTPLVRLRRVTDGAVADIVAKLEFFNPANSVKDRIGVAMLQAAEQAGLIKPDTIILEPTSGNTGIALAMVCAARGYRCVLTMPETMSLERRMLLRAYGAELILTPGADGMSGAIAKAEELAKTDQRYFVPQQFENPANPAIHRVTTAEEVWRDTDGKVDIVVAGVGTGGTITGVAQVIKERKPSARFVAVEPAASPVLSGGQKGPHPIQGIGAGFVPPVLDQDLVDEIITVGNEDALNVARRLAREEGLLVGISSGAATVAALQVARRPENAGKLIVVVLPDFGERYLSTPLFADVAD.

Residue Lys44 is modified to N6-(pyridoxal phosphate)lysine. Pyridoxal 5'-phosphate contacts are provided by residues Asn74, 178-182 (GTGGT), and Ser266.

It belongs to the cysteine synthase/cystathionine beta-synthase family. Homodimer. Pyridoxal 5'-phosphate serves as cofactor.

It catalyses the reaction O-acetyl-L-serine + hydrogen sulfide = L-cysteine + acetate. It participates in amino-acid biosynthesis; L-cysteine biosynthesis; L-cysteine from L-serine: step 2/2. Its function is as follows. Catalyzes the conversion of O-acetylserine (OAS) to cysteine through the elimination of acetate and addition of hydrogen sulfide. This Mycobacterium bovis (strain ATCC BAA-935 / AF2122/97) protein is O-acetylserine sulfhydrylase (cysK).